Consider the following 119-residue polypeptide: NAD(P)H-quinone oxidoreductase subunit M (119 aa).

It belongs to the complex I NdhM subunit family. NDH-1 can be composed of about 15 different subunits; different subcomplexes with different compositions have been identified which probably have different functions.

The protein localises to the cellular thylakoid membrane. It catalyses the reaction a plastoquinone + NADH + (n+1) H(+)(in) = a plastoquinol + NAD(+) + n H(+)(out). The catalysed reaction is a plastoquinone + NADPH + (n+1) H(+)(in) = a plastoquinol + NADP(+) + n H(+)(out). Functionally, NDH-1 shuttles electrons from an unknown electron donor, via FMN and iron-sulfur (Fe-S) centers, to quinones in the respiratory and/or the photosynthetic chain. The immediate electron acceptor for the enzyme in this species is believed to be plastoquinone. Couples the redox reaction to proton translocation, and thus conserves the redox energy in a proton gradient. Cyanobacterial NDH-1 also plays a role in inorganic carbon-concentration. The polypeptide is NAD(P)H-quinone oxidoreductase subunit M (Gloeothece citriformis (strain PCC 7424) (Cyanothece sp. (strain PCC 7424))).